Consider the following 89-residue polypeptide: Small ribosomal subunit protein uS15 (89 aa).

Residues Met-1–Thr-22 are disordered. Residues Gln-10–Thr-22 are compositionally biased toward polar residues.

The protein belongs to the universal ribosomal protein uS15 family. Part of the 30S ribosomal subunit. Forms a bridge to the 50S subunit in the 70S ribosome, contacting the 23S rRNA.

Its function is as follows. One of the primary rRNA binding proteins, it binds directly to 16S rRNA where it helps nucleate assembly of the platform of the 30S subunit by binding and bridging several RNA helices of the 16S rRNA. Functionally, forms an intersubunit bridge (bridge B4) with the 23S rRNA of the 50S subunit in the ribosome. This Chloroflexus aggregans (strain MD-66 / DSM 9485) protein is Small ribosomal subunit protein uS15.